The following is a 1172-amino-acid chain: Structural maintenance of chromosomes protein 2 (1172 aa).

Gly-32–Ser-39 contacts ATP. 2 coiled-coil regions span residues Arg-172–Glu-204 and Ser-258–Glu-507. In terms of domain architecture, SMC hinge spans Ser-520–Val-640. Positions Leu-676 to Trp-941 form a coiled coil.

It belongs to the SMC family. SMC2 subfamily. Forms a heterodimer with cut3/smc4. Component of the condensin complex, which contains the cut3 and cut14 heterodimer, and three non smc subunits that probably regulate the complex: cnd1, cnd2 and cnd3.

It is found in the nucleus. The protein localises to the cytoplasm. Its subcellular location is the chromosome. In terms of biological role, central component of the condensin complex, a complex required for conversion of interphase chromatin into mitotic-like condense chromosomes. The condensin complex probably introduces positive supercoils into relaxed DNA in the presence of type I topoisomerases and converts nicked DNA into positive knotted forms in the presence of type II topoisomerases. In Schizosaccharomyces pombe (strain 972 / ATCC 24843) (Fission yeast), this protein is Structural maintenance of chromosomes protein 2 (cut14).